Reading from the N-terminus, the 342-residue chain is Anthranilate phosphoribosyltransferase (342 aa).

Residues glycine 81, glycine 84–aspartate 85, threonine 89, asparagine 91–threonine 94, lysine 109–serine 117, and threonine 121 contribute to the 5-phospho-alpha-D-ribose 1-diphosphate site. Glycine 81 contacts anthranilate. Residue serine 93 participates in Mg(2+) binding. Residue asparagine 112 participates in anthranilate binding. Arginine 167 provides a ligand contact to anthranilate. Mg(2+) is bound by residues aspartate 225 and glutamate 226.

The protein belongs to the anthranilate phosphoribosyltransferase family. Homodimer. Mg(2+) serves as cofactor.

It catalyses the reaction N-(5-phospho-beta-D-ribosyl)anthranilate + diphosphate = 5-phospho-alpha-D-ribose 1-diphosphate + anthranilate. It participates in amino-acid biosynthesis; L-tryptophan biosynthesis; L-tryptophan from chorismate: step 2/5. Its function is as follows. Catalyzes the transfer of the phosphoribosyl group of 5-phosphorylribose-1-pyrophosphate (PRPP) to anthranilate to yield N-(5'-phosphoribosyl)-anthranilate (PRA). This chain is Anthranilate phosphoribosyltransferase, found in Agrobacterium fabrum (strain C58 / ATCC 33970) (Agrobacterium tumefaciens (strain C58)).